The following is a 65-amino-acid chain: MLSIRVDEHKPFDISLRNFKRACEKAGIKQELRDRQHYVKPTEKRKIAKRQAVKRARISQRRAFI.

The protein belongs to the bacterial ribosomal protein bS21 family.

This is Small ribosomal subunit protein bS21A from Francisella tularensis subsp. holarctica (strain LVS).